Reading from the N-terminus, the 270-residue chain is 4-hydroxy-tetrahydrodipicolinate reductase (270 aa).

NAD(+)-binding positions include 9–14 (GAGGRM) and glutamate 35. Arginine 36 contributes to the NADP(+) binding site. Residues 99–101 (GTT) and 123–126 (ASNF) contribute to the NAD(+) site. Catalysis depends on histidine 156, which acts as the Proton donor/acceptor. Histidine 157 is a binding site for (S)-2,3,4,5-tetrahydrodipicolinate. Lysine 160 acts as the Proton donor in catalysis. 166–167 (GT) contacts (S)-2,3,4,5-tetrahydrodipicolinate.

It belongs to the DapB family.

The protein resides in the cytoplasm. The catalysed reaction is (S)-2,3,4,5-tetrahydrodipicolinate + NAD(+) + H2O = (2S,4S)-4-hydroxy-2,3,4,5-tetrahydrodipicolinate + NADH + H(+). It carries out the reaction (S)-2,3,4,5-tetrahydrodipicolinate + NADP(+) + H2O = (2S,4S)-4-hydroxy-2,3,4,5-tetrahydrodipicolinate + NADPH + H(+). It participates in amino-acid biosynthesis; L-lysine biosynthesis via DAP pathway; (S)-tetrahydrodipicolinate from L-aspartate: step 4/4. Its function is as follows. Catalyzes the conversion of 4-hydroxy-tetrahydrodipicolinate (HTPA) to tetrahydrodipicolinate. The protein is 4-hydroxy-tetrahydrodipicolinate reductase of Haemophilus influenzae (strain PittEE).